The following is a 534-amino-acid chain: Calcium-dependent protein kinase 29 (534 aa).

Positions 1–72 are disordered; the sequence is MGFCFSKFGK…STSSGSQIGP (72 aa). Gly-2 carries N-myristoyl glycine lipidation. A compositionally biased stretch (low complexity) spans 16–27; it reads IPISSSSDSSPP. Positions 49-63 are enriched in pro residues; it reads NPQPKPKPAPPPPPS. The Protein kinase domain occupies 85–343; it reads YDLHKELGRG…AAEALEHPWM (259 aa). ATP-binding positions include 91–99 and Lys-114; that span reads LGRGQFGIT. Asp-209 functions as the Proton acceptor in the catalytic mechanism. The residue at position 249 (Ser-249) is a Phosphoserine. Positions 348–378 are autoinhibitory domain; the sequence is ISDKPINSAVLVRMKQFRAMNKLKKLALKVI. 4 consecutive EF-hand domains span residues 385–420, 421–456, 457–492, and 493–527; these read EEIK…LGSK, LTES…RHRL, EKEE…YGMG, and DDAT…GTTD. Positions 398, 400, 402, 404, 409, 434, 436, 438, 440, 445, 470, 472, 474, 481, 505, 507, 509, 511, and 516 each coordinate Ca(2+).

The protein belongs to the protein kinase superfamily. Ser/Thr protein kinase family. CDPK subfamily.

The protein localises to the membrane. It catalyses the reaction L-seryl-[protein] + ATP = O-phospho-L-seryl-[protein] + ADP + H(+). The catalysed reaction is L-threonyl-[protein] + ATP = O-phospho-L-threonyl-[protein] + ADP + H(+). Its activity is regulated as follows. Activated by calcium. Autophosphorylation may play an important role in the regulation of the kinase activity. Functionally, may play a role in signal transduction pathways that involve calcium as a second messenger. In Arabidopsis thaliana (Mouse-ear cress), this protein is Calcium-dependent protein kinase 29 (CPK29).